A 457-amino-acid polypeptide reads, in one-letter code: Serine--tRNA ligase (457 aa).

252 to 254 (TAE) lines the L-serine pocket. Residues 283–285 (RKE) and valine 299 each bind ATP. Glutamate 306 serves as a coordination point for L-serine. Residue 370-373 (EMVS) coordinates ATP. Residue threonine 406 coordinates L-serine.

This sequence belongs to the class-II aminoacyl-tRNA synthetase family. Type-1 seryl-tRNA synthetase subfamily. Homodimer. The tRNA molecule binds across the dimer.

It localises to the cytoplasm. The catalysed reaction is tRNA(Ser) + L-serine + ATP = L-seryl-tRNA(Ser) + AMP + diphosphate + H(+). It carries out the reaction tRNA(Sec) + L-serine + ATP = L-seryl-tRNA(Sec) + AMP + diphosphate + H(+). It participates in aminoacyl-tRNA biosynthesis; selenocysteinyl-tRNA(Sec) biosynthesis; L-seryl-tRNA(Sec) from L-serine and tRNA(Sec): step 1/1. In terms of biological role, catalyzes the attachment of serine to tRNA(Ser). Is also able to aminoacylate tRNA(Sec) with serine, to form the misacylated tRNA L-seryl-tRNA(Sec), which will be further converted into selenocysteinyl-tRNA(Sec). The protein is Serine--tRNA ligase of Saccharolobus islandicus (strain Y.N.15.51 / Yellowstone #2) (Sulfolobus islandicus).